Here is a 284-residue protein sequence, read N- to C-terminus: Isopentenyl-diphosphate delta-isomerase (284 aa).

Lysine 77 contacts substrate. 2 residues coordinate Mg(2+): histidine 81 and histidine 92. The Nudix hydrolase domain maps to 90-256 (LLHRAFSVFL…SLVFTPWFKL (167 aa)). 2 residues coordinate substrate: arginine 111 and lysine 115. Cysteine 127 is a catalytic residue. Serine 128 is a binding site for substrate. Positions 128–172 (SHPLCVPSELGVDSSLEGSKDVNNLTNAVKGAKVAAQRKLEHELG) match the Nudix box motif. Residues glutamate 204 and glutamate 206 each coordinate Mg(2+). Glutamate 206 is an active-site residue.

It belongs to the IPP isomerase type 1 family. It depends on Mg(2+) as a cofactor.

The protein localises to the cytoplasm. It catalyses the reaction isopentenyl diphosphate = dimethylallyl diphosphate. It participates in isoprenoid biosynthesis; dimethylallyl diphosphate biosynthesis; dimethylallyl diphosphate from isopentenyl diphosphate: step 1/1. In terms of biological role, isopentenyl-diphosphate delta-isomerase; part of the second module of ergosterol biosynthesis pathway that includes the middle steps of the pathway. IDI1 catalyzes the 1,3-allylic rearrangement of isopentenyl (IPP) to its highly electrophilic allylic isomer, dimethylallyl diphosphate (DMAPP). The second module is carried out in the vacuole and involves the formation of farnesyl diphosphate, which is also an important intermediate in the biosynthesis of ubiquinone, dolichol, heme and prenylated proteins. Activity by the mevalonate kinase ERG12 first converts mevalonate into 5-phosphomevalonate. 5-phosphomevalonate is then further converted to 5-diphosphomevalonate by the phosphomevalonate kinase ERG8. The diphosphomevalonate decarboxylase MVD then produces isopentenyl diphosphate. The isopentenyl-diphosphate delta-isomerase IDI1 then catalyzes the 1,3-allylic rearrangement of the homoallylic substrate isopentenyl (IPP) to its highly electrophilic allylic isomer, dimethylallyl diphosphate (DMAPP). Finally the farnesyl diphosphate synthase ERG20 catalyzes the sequential condensation of isopentenyl pyrophosphate with dimethylallyl pyrophosphate, and then with the resultant geranylpyrophosphate to the ultimate product farnesyl pyrophosphate. This chain is Isopentenyl-diphosphate delta-isomerase, found in Candida albicans (strain SC5314 / ATCC MYA-2876) (Yeast).